We begin with the raw amino-acid sequence, 259 residues long: NAD kinase (259 aa).

The active-site Proton acceptor is aspartate 49. NAD(+) contacts are provided by residues 49-50, arginine 54, 118-119, aspartate 148, alanine 156, 159-164, and alanine 183; these read DG, NE, and TAYNYS.

This sequence belongs to the NAD kinase family. It depends on a divalent metal cation as a cofactor.

Its subcellular location is the cytoplasm. It carries out the reaction NAD(+) + ATP = ADP + NADP(+) + H(+). Involved in the regulation of the intracellular balance of NAD and NADP, and is a key enzyme in the biosynthesis of NADP. Catalyzes specifically the phosphorylation on 2'-hydroxyl of the adenosine moiety of NAD to yield NADP. The chain is NAD kinase from Xylella fastidiosa (strain Temecula1 / ATCC 700964).